The sequence spans 196 residues: Probable GTP-binding protein EngB (196 aa).

An EngB-type G domain is found at 21–195; sequence DVSEICLIGR…YELINKLLGS (175 aa). GTP-binding positions include 29-36, 56-60, 75-78, 142-145, and 174-176; these read GRSNVGKS, GKTRL, DAPG, TKLD, and ISN. Residues serine 36 and threonine 58 each coordinate Mg(2+).

Belongs to the TRAFAC class TrmE-Era-EngA-EngB-Septin-like GTPase superfamily. EngB GTPase family. The cofactor is Mg(2+).

In terms of biological role, necessary for normal cell division and for the maintenance of normal septation. The chain is Probable GTP-binding protein EngB from Mycoplasma capricolum subsp. capricolum (strain California kid / ATCC 27343 / NCTC 10154).